The chain runs to 227 residues: PKHD-type hydroxylase BamMC406_4714 (227 aa).

Residues 78–178 (KVFPPLFNRY…RVASFFWIQS (101 aa)) form the Fe2OG dioxygenase domain. Positions 96, 98, and 159 each coordinate Fe cation. Arginine 169 contributes to the 2-oxoglutarate binding site.

Fe(2+) serves as cofactor. Requires L-ascorbate as cofactor.

This chain is PKHD-type hydroxylase BamMC406_4714, found in Burkholderia ambifaria (strain MC40-6).